The chain runs to 38 residues: Glutathione S-transferase 2 (38 aa).

This sequence belongs to the GST superfamily. Phi family.

It catalyses the reaction RX + glutathione = an S-substituted glutathione + a halide anion + H(+). In terms of biological role, conjugation of reduced glutathione to a wide number of exogenous and endogenous hydrophobic electrophiles. In plants, may have a detoxification role against certain herbicides. This is Glutathione S-transferase 2 from Populus euphratica (Euphrates poplar).